Consider the following 387-residue polypeptide: Large ribosomal subunit protein uL3 (387 aa).

This sequence belongs to the universal ribosomal protein uL3 family.

The protein resides in the cytoplasm. The polypeptide is Large ribosomal subunit protein uL3 (RPL3) (Eremothecium gossypii (strain ATCC 10895 / CBS 109.51 / FGSC 9923 / NRRL Y-1056) (Yeast)).